The following is a 210-amino-acid chain: S-norcoclaurine synthase (210 aa).

Positions 1–19 (MMKMEVVFVFLMLLGTINC) are cleaved as a signal peptide. 108 to 110 (YKE) is a dopamine binding site. The Proton donor role is filled by Lys122. Asp141 provides a ligand contact to (4-hydroxyphenyl)acetaldehyde.

It belongs to the BetVI family. In terms of assembly, concentration-dependent dimerization, but mainly monomeric at concentrations around 10 uM. As to expression, expressed most abundantly in the rhizomes and to a lesser extent in petioles, roots, leaves and flower buds.

It carries out the reaction (4-hydroxyphenyl)acetaldehyde + dopamine = (S)-norcoclaurine + H2O. Functionally, involved in the biosynthesis of the common precursor of all benzylisoquinoline alkaloids such as morphine, sanguinarine, codeine or berberine. Condenses dopamine and 4-hydroxyphenylacetaldehyde. The sequence is that of S-norcoclaurine synthase from Thalictrum flavum subsp. glaucum (Yellow meadow rue).